A 422-amino-acid polypeptide reads, in one-letter code: MILIKNGRVMDPKSQRDQVADVLIDGKQIVKIASAIECQEAQVIDASGLIVAPGLVDIHVHFREPGQTHKEDIHTGALAAAAGGVTTVVMMANTNPVISDVETLQEVLASAAKEKIHIYTNASVTQAFNGKDVTDFKALLEAGAVSFSDDGIPLESSKVLKEAFDLANANQTFISLHEEDPQLNGVLGFNEGIAEEHFHFCGATGVAEYSMIARDVMIAYDRQAHVHIQHLSKAESVQVVAFAQQLGAKVTAEVSPQHFSTTEDLLLTAGTSAKMNPPLRTQRDRLAVIEGLKSGVITVIATDHAPHHKDEKAVDDMTKAPSGMTGLETSLSLGLTHLVEPGHLTLMSLLEKMTLNPALLYGFDAGYLAENGPADLVIFADKQERLITENFASKASNSPFIGNKLKGVVKYTIADGEVVYPN.

Zn(2+) contacts are provided by His59 and His61. Substrate-binding positions include 61-63 (HFR) and Asn93. Positions 150, 177, and 230 each coordinate Zn(2+). Asn276 provides a ligand contact to substrate. Asp303 serves as a coordination point for Zn(2+). Asp303 is an active-site residue. His307 contributes to the substrate binding site.

It belongs to the metallo-dependent hydrolases superfamily. DHOase family. Class I DHOase subfamily. Requires Zn(2+) as cofactor.

The catalysed reaction is (S)-dihydroorotate + H2O = N-carbamoyl-L-aspartate + H(+). The protein operates within pyrimidine metabolism; UMP biosynthesis via de novo pathway; (S)-dihydroorotate from bicarbonate: step 3/3. Functionally, catalyzes the reversible cyclization of carbamoyl aspartate to dihydroorotate. This Streptococcus pyogenes serotype M3 (strain ATCC BAA-595 / MGAS315) protein is Dihydroorotase.